Reading from the N-terminus, the 130-residue chain is Small ribosomal subunit protein uS11 (130 aa).

The protein belongs to the universal ribosomal protein uS11 family. In terms of assembly, part of the 30S ribosomal subunit. Interacts with proteins S7 and S18. Binds to IF-3.

Functionally, located on the platform of the 30S subunit, it bridges several disparate RNA helices of the 16S rRNA. Forms part of the Shine-Dalgarno cleft in the 70S ribosome. This chain is Small ribosomal subunit protein uS11, found in Dehalococcoides mccartyi (strain ATCC BAA-2266 / KCTC 15142 / 195) (Dehalococcoides ethenogenes (strain 195)).